A 284-amino-acid polypeptide reads, in one-letter code: RNase adapter protein RapZ (284 aa).

ATP is bound at residue 8-15 (GRSGSGKS). 56 to 59 (DVRN) contributes to the GTP binding site. The segment at 266 to 284 (RSRGKNVQSRHRTLEKRRS) is RNA-binding.

Belongs to the RapZ-like family. RapZ subfamily. As to quaternary structure, homotrimer.

Functionally, modulates the synthesis of GlmS, by affecting the processing and stability of the regulatory small RNA GlmZ. When glucosamine-6-phosphate (GlcN6P) concentrations are high in the cell, RapZ binds GlmZ and targets it to cleavage by RNase E. Consequently, GlmZ is inactivated and unable to activate GlmS synthesis. Under low GlcN6P concentrations, RapZ is sequestered and inactivated by an other regulatory small RNA, GlmY, preventing GlmZ degradation and leading to synthesis of GlmS. The sequence is that of RNase adapter protein RapZ from Erwinia tasmaniensis (strain DSM 17950 / CFBP 7177 / CIP 109463 / NCPPB 4357 / Et1/99).